Consider the following 330-residue polypeptide: RNA/RNP complex-1-interacting phosphatase (330 aa).

The span at 1 to 12 (MSQWHHPRSGWG) shows a compositional bias: basic residues. A disordered region spans residues 1 to 32 (MSQWHHPRSGWGRRRDFSGRSSAKKKGGNHIP). The region spanning 61-208 (FEKKLAPEEC…LQNGPIRKNW (148 aa)) is the Tyrosine-protein phosphatase domain. Cys-152 (phosphocysteine intermediate) is an active-site residue. Residue 153–158 (THGLNR) participates in substrate binding. Arg-158 (proton donor/acceptor) is an active-site residue.

It belongs to the protein-tyrosine phosphatase family. Non-receptor class dual specificity subfamily. In terms of assembly, monomer. May interact with SFRS7 and SFRS9/SRP30C.

The protein resides in the nucleus. It is found in the nucleus speckle. Its function is as follows. Possesses RNA 5'-triphosphatase and diphosphatase activities, but displays a poor protein-tyrosine phosphatase activity. In addition, has phosphatase activity with ATP, ADP and O-methylfluorescein phosphate (in vitro). Binds to RNA. May participate in nuclear mRNA metabolism. This chain is RNA/RNP complex-1-interacting phosphatase, found in Homo sapiens (Human).